Consider the following 195-residue polypeptide: MADPSAKQTGQKSVKIAAGAVVCVESDIRGDVTIGARTVVHPKARIIAEAGPIVIGEGNLIEEQALIINSFPENLLPNTDDVEPKPMIIGVNNVFEVGCVCQALKIGDNNVIESKADVGRSVMLTSGCIVGSCCQIHTCEVIPENTVIYGSECLRRVQTERPQPQTLQLDFLMKILPNYHHLKKTVKSSGTPARS.

This sequence belongs to the dynactin subunits 5/6 family. Dynactin subunit 6 subfamily. In terms of assembly, member of the pointed-end complex of the dynactin shoulder complex which contains dctn4, dctn5 and dctn6 subunits and Actr10. Within the complex dctn6 forms a heterodimer with dctn5. Interacts with plk1.

The protein resides in the cytoplasm. Its subcellular location is the cytoskeleton. It localises to the chromosome. The protein localises to the centromere. It is found in the kinetochore. Part of the dynactin complex that activates the molecular motor dynein for ultra-processive transport along microtubules. The protein is Dynactin subunit 6 (dctn6) of Danio rerio (Zebrafish).